The primary structure comprises 904 residues: Nitrate reductase [NADH] 2 (904 aa).

Polar residues-rich tracts occupy residues 1 to 10 (MAASVENRQF) and 35 to 50 (PSPN…NSTI). Positions 1–65 (MAASVENRQF…SSEDDDDDDE (65 aa)) are disordered. Residues 56–65 (SSEDDDDDDE) show a composition bias toward acidic residues. C183 is a Mo-molybdopterin binding site. In terms of domain architecture, Cytochrome b5 heme-binding spans 531-606 (SKMYSMSEVR…LEDFRIGELI (76 aa)). Heme contacts are provided by H566 and H589. An FAD-binding FR-type domain is found at 647-759 (REKIPCKLID…KGPLGHIEYQ (113 aa)). Residues 699-702 (RAYT), 716-720 (VVKIY), F721, F728, 733-735 (QMS), and T786 each bind FAD.

Belongs to the nitrate reductase family. In terms of assembly, homodimer. It depends on FAD as a cofactor. Heme serves as cofactor. Requires Mo-molybdopterin as cofactor.

The enzyme catalyses nitrite + NAD(+) + H2O = nitrate + NADH + H(+). Regulated by the nitrogen source and controlled by the circadian rhythm. Functionally, nitrate reductase is a key enzyme involved in the first step of nitrate assimilation in plants, fungi and bacteria. This chain is Nitrate reductase [NADH] 2 (NIA2), found in Nicotiana tabacum (Common tobacco).